The chain runs to 453 residues: CCA-adding enzyme (453 aa).

Residues S53 and K56 each coordinate ATP. 2 residues coordinate CTP: S53 and K56. Residues D65, D67, and D119 each coordinate Mg(2+). ATP contacts are provided by H142, K161, and Y170. H142, K161, and Y170 together coordinate CTP.

Belongs to the tRNA nucleotidyltransferase/poly(A) polymerase family. Archaeal CCA-adding enzyme subfamily. In terms of assembly, homodimer. Requires Mg(2+) as cofactor.

The enzyme catalyses a tRNA precursor + 2 CTP + ATP = a tRNA with a 3' CCA end + 3 diphosphate. It carries out the reaction a tRNA with a 3' CCA end + 2 CTP + ATP = a tRNA with a 3' CCACCA end + 3 diphosphate. Its function is as follows. Catalyzes the addition and repair of the essential 3'-terminal CCA sequence in tRNAs without using a nucleic acid template. Adds these three nucleotides in the order of C, C, and A to the tRNA nucleotide-73, using CTP and ATP as substrates and producing inorganic pyrophosphate. tRNA 3'-terminal CCA addition is required both for tRNA processing and repair. Also involved in tRNA surveillance by mediating tandem CCA addition to generate a CCACCA at the 3' terminus of unstable tRNAs. While stable tRNAs receive only 3'-terminal CCA, unstable tRNAs are marked with CCACCA and rapidly degraded. The sequence is that of CCA-adding enzyme from Pyrococcus furiosus (strain ATCC 43587 / DSM 3638 / JCM 8422 / Vc1).